We begin with the raw amino-acid sequence, 286 residues long: MRQITDISQLKEAIKQYHSEGKSIGFVPTMGFLHEGHLTLADKARQENDAVIMSIFVNPAQFGPNEDFEAYPRDIERDAALAENAGVDILFTPDAHDMYPGEKNVTIHVERRTDVLCGRSREGHFDGVAIVLTKLFNLVKPTRAYFGLKDAQQVAVVDGLISDFFMDIELVPVDTVREEDGLAKSSRNVYLTAEERKEAPKLYRALQTSAELVQAGERDPEAVIKAAKDIIETTSGTIDYVELYSYPELEPVNEIAGKMILAVAVAFSKARLIDNIIIDIREMERI.

30–37 (MGFLHEGH) serves as a coordination point for ATP. H37 (proton donor) is an active-site residue. Q61 serves as a coordination point for (R)-pantoate. A beta-alanine-binding site is contributed by Q61. Position 147 to 150 (147 to 150 (GLKD)) interacts with ATP. Q153 serves as a coordination point for (R)-pantoate. Residues V176 and 184–187 (KSSR) contribute to the ATP site.

The protein belongs to the pantothenate synthetase family. As to quaternary structure, homodimer.

The protein localises to the cytoplasm. It carries out the reaction (R)-pantoate + beta-alanine + ATP = (R)-pantothenate + AMP + diphosphate + H(+). The protein operates within cofactor biosynthesis; (R)-pantothenate biosynthesis; (R)-pantothenate from (R)-pantoate and beta-alanine: step 1/1. Its function is as follows. Catalyzes the condensation of pantoate with beta-alanine in an ATP-dependent reaction via a pantoyl-adenylate intermediate. The sequence is that of Pantothenate synthetase from Bacillus subtilis (strain 168).